Here is a 475-residue protein sequence, read N- to C-terminus: ATP synthase subunit beta (475 aa).

155–162 (GGAGVGKT) contacts ATP.

Belongs to the ATPase alpha/beta chains family. In terms of assembly, F-type ATPases have 2 components, CF(1) - the catalytic core - and CF(0) - the membrane proton channel. CF(1) has five subunits: alpha(3), beta(3), gamma(1), delta(1), epsilon(1). CF(0) has three main subunits: a(1), b(2) and c(9-12). The alpha and beta chains form an alternating ring which encloses part of the gamma chain. CF(1) is attached to CF(0) by a central stalk formed by the gamma and epsilon chains, while a peripheral stalk is formed by the delta and b chains.

The protein resides in the cell inner membrane. The catalysed reaction is ATP + H2O + 4 H(+)(in) = ADP + phosphate + 5 H(+)(out). Produces ATP from ADP in the presence of a proton gradient across the membrane. The catalytic sites are hosted primarily by the beta subunits. This chain is ATP synthase subunit beta, found in Rhizobium etli (strain ATCC 51251 / DSM 11541 / JCM 21823 / NBRC 15573 / CFN 42).